A 314-amino-acid chain; its full sequence is Olfactory receptor 1E1 (314 aa).

The Extracellular segment spans residues 1 to 25; it reads MMGQNQTSISDFLLLGLPIQPEQQN. N-linked (GlcNAc...) asparagine glycosylation is present at Asn5. The chain crosses the membrane as a helical span at residues 26 to 49; sequence LCYALFLAMYLTTLLGNLLIIVLI. Residues 50 to 57 lie on the Cytoplasmic side of the membrane; that stretch reads RLDSHLHT. The chain crosses the membrane as a helical span at residues 58-79; that stretch reads PMYLFLSNLSFSDLCFSSVTIP. Over 80–100 the chain is Extracellular; sequence KLLQNMQNQDPSIPYADCLTQ. A disulfide bridge links Cys97 with Cys189. The chain crosses the membrane as a helical span at residues 101-120; sequence MYFFLLFGDLESFLLVAMAY. At 121 to 139 the chain is on the cytoplasmic side; sequence DRYVAICFPLHYTAIMSPM. Residues 140 to 158 traverse the membrane as a helical segment; sequence LCLSVVALSWVLTTFHAML. The Extracellular segment spans residues 159 to 195; that stretch reads HTLLMARLCFCADNVIPHFFCDMSALLKLACSDTRVN. A helical membrane pass occupies residues 196–219; the sequence is EWVIFIMGGLILVIPFLLILGSYA. Residues 220 to 236 lie on the Cytoplasmic side of the membrane; sequence RIVSSILKVPSSKGICK. A helical transmembrane segment spans residues 237–259; it reads ALSTCGSHLSVVSLFYGTVIGLY. At 260 to 272 the chain is on the extracellular side; that stretch reads LCPSANSSTLKDT. The chain crosses the membrane as a helical span at residues 273–292; that stretch reads VMAMIYTVVTPMLNPFIYSL. The Cytoplasmic portion of the chain corresponds to 293–314; that stretch reads RNRDMKGALSRVIHQKKTFFSL.

Belongs to the G-protein coupled receptor 1 family.

It localises to the cell membrane. Odorant receptor. The sequence is that of Olfactory receptor 1E1 (OR1E1) from Pan troglodytes (Chimpanzee).